The sequence spans 78 residues: Probable [Fe-S]-dependent transcriptional repressor (78 aa).

Iron-sulfur cluster is bound by residues Cys-56, Cys-61, Cys-64, and Cys-70.

The protein belongs to the FeoC family.

May function as a transcriptional regulator that controls feoABC expression. The polypeptide is Probable [Fe-S]-dependent transcriptional repressor (Escherichia coli O127:H6 (strain E2348/69 / EPEC)).